The following is a 452-amino-acid chain: tRNA pseudouridine synthase Pus10 (452 aa).

Residues 71–200 (EMLRALAPSC…DGHVEIQIQP (130 aa)) form the THUMP domain. Aspartate 269 acts as the Nucleophile in catalysis. Residues tyrosine 335 and tyrosine 406 each contribute to the substrate site.

It belongs to the pseudouridine synthase Pus10 family.

It carries out the reaction uridine(54) in tRNA = pseudouridine(54) in tRNA. The enzyme catalyses uridine(55) in tRNA = pseudouridine(55) in tRNA. In terms of biological role, responsible for synthesis of pseudouridine from uracil-54 and uracil-55 in the psi GC loop of transfer RNAs. The protein is tRNA pseudouridine synthase Pus10 of Methanothrix thermoacetophila (strain DSM 6194 / JCM 14653 / NBRC 101360 / PT) (Methanosaeta thermophila).